Consider the following 377-residue polypeptide: Nitric oxide reductase FlRd-NAD(+) reductase (377 aa).

It belongs to the FAD-dependent oxidoreductase family. The cofactor is FAD.

The protein resides in the cytoplasm. It catalyses the reaction 2 reduced [nitric oxide reductase rubredoxin domain] + NAD(+) + H(+) = 2 oxidized [nitric oxide reductase rubredoxin domain] + NADH. Its pathway is nitrogen metabolism; nitric oxide reduction. Functionally, one of at least two accessory proteins for anaerobic nitric oxide (NO) reductase. Reduces the rubredoxin moiety of NO reductase. The sequence is that of Nitric oxide reductase FlRd-NAD(+) reductase from Shigella boydii serotype 18 (strain CDC 3083-94 / BS512).